The sequence spans 317 residues: tRNA dimethylallyltransferase (317 aa).

14-21 (GPTAVGKT) contacts ATP. A substrate-binding site is contributed by 16–21 (TAVGKT). The interval 39-42 (DSMQ) is interaction with substrate tRNA.

It belongs to the IPP transferase family. In terms of assembly, monomer. Mg(2+) is required as a cofactor.

It carries out the reaction adenosine(37) in tRNA + dimethylallyl diphosphate = N(6)-dimethylallyladenosine(37) in tRNA + diphosphate. Catalyzes the transfer of a dimethylallyl group onto the adenine at position 37 in tRNAs that read codons beginning with uridine, leading to the formation of N6-(dimethylallyl)adenosine (i(6)A). This chain is tRNA dimethylallyltransferase, found in Bacillus cereus (strain G9842).